Consider the following 266-residue polypeptide: Short-chain dehydrogenase/reductase atnB (266 aa).

Ile13, Asp57, and Asn85 together coordinate NADP(+). Catalysis depends on proton donor residues Ser147 and Tyr166. 4 residues coordinate NADP(+): Tyr166, Lys170, Val199, and Thr201. Lys170 acts as the Lowers pKa of active site Tyr in catalysis.

Belongs to the short-chain dehydrogenases/reductases (SDR) family.

The protein operates within secondary metabolite biosynthesis; terpenoid biosynthesis. Its function is as follows. Short-chain dehydrogenase/reductase; part of the gene cluster that mediates the biosynthesis of the meroterpenoids arthripenoids. The pathway begins with the HR-PKS atnH that catalyzes two chain-extension steps to form a reduced triketide, which then primes the SAT domain in the NR-PKS atnG to initiate three more cycles of extension to give a linear hexaketide corresponding to the polyketide part of arthripenoids. The FAD-dependent monooxygenase atnJ then performs an oxidative decarboxylation at C11 of the atnH/atnG product, via an electrophilic aromatic hydroxylation with concomitant ipso-decarboxylation. The membrane-bound polyprenyl transferase atnF then introduces a farnesyl group before the FAD-dependent monooxygenase atnK functions as the first epoxidase on terminal C12'-C13' olefin, followed by a second epoxidation on C7'-C8' catalyzed by atnA. The terpene cyclase/mutase atnI then initiates the sequential tricyclic ring formation through protonation of the terminal epoxide and catalyzes the regioselective and stereoselective 6/6/6-tricyclic ring formation. The cytochrome P450 monooxygenase atnM is responsible for hydroxylating both C1' and C10'. The next steps may involve ketoreduction and acetyl transfer by the ketoreductase atnB and the acetyltransferase atnC, and lead to the production of arthripenoid B, the final biosynthetic product of the atn cluster. The hydroquinone moiety in arthripenoid B is prone to undergo spontaneous oxidation to afford a benzoquinone compound, a key intermediate for generating structure diversity. For instance, addition of a cysteine followed by ring contraction gives arthripenoid A, tautomerization gives the main product arthripenoid C, addition of a molecular of water or amine affords arthripenoid D or E, respectively, and loss of one water forms arthripenoid F. This is Short-chain dehydrogenase/reductase atnB from Arthrinium sp.